Here is a 186-residue protein sequence, read N- to C-terminus: Large ribosomal subunit protein uL5c (186 aa).

It belongs to the universal ribosomal protein uL5 family. In terms of assembly, part of the 50S ribosomal subunit; contacts the 5S rRNA.

The protein resides in the plastid. Its subcellular location is the chloroplast. Functionally, binds 5S rRNA, forms part of the central protuberance of the 50S subunit. The chain is Large ribosomal subunit protein uL5c (rpl5) from Pleurastrum terricola (Filamentous green alga).